Here is a 170-residue protein sequence, read N- to C-terminus: MALLPILEFPDPRLRTKAVPVDAAEVTSQAFQTLLDDMFHTMYEAPGIGLAASQVDVHKRFMVIDISDEKNLPQVFVNPEIVSKQGEQLYQEGCLSVPGIYADVSRADAITVRYLDRQGQPQELHADGLLAVCIQHEMDHLDGKLFVDYLSPLKREMVRKKLAKQRKHVA.

Residues C94 and H136 each coordinate Fe cation. Residue E137 is part of the active site. H140 serves as a coordination point for Fe cation.

This sequence belongs to the polypeptide deformylase family. Fe(2+) is required as a cofactor.

It catalyses the reaction N-terminal N-formyl-L-methionyl-[peptide] + H2O = N-terminal L-methionyl-[peptide] + formate. Removes the formyl group from the N-terminal Met of newly synthesized proteins. Requires at least a dipeptide for an efficient rate of reaction. N-terminal L-methionine is a prerequisite for activity but the enzyme has broad specificity at other positions. The polypeptide is Peptide deformylase 2 (Xanthomonas axonopodis pv. citri (strain 306)).